The primary structure comprises 289 residues: Diaminopimelate epimerase (289 aa).

Residues asparagine 13, glutamine 47, and asparagine 67 each coordinate substrate. Cysteine 76 acts as the Proton donor in catalysis. Substrate contacts are provided by residues 77 to 78 (GN), asparagine 167, asparagine 200, and 218 to 219 (ER). The active-site Proton acceptor is the cysteine 227. Residue 228–229 (GT) participates in substrate binding.

It belongs to the diaminopimelate epimerase family. Homodimer.

Its subcellular location is the cytoplasm. The enzyme catalyses (2S,6S)-2,6-diaminopimelate = meso-2,6-diaminopimelate. The protein operates within amino-acid biosynthesis; L-lysine biosynthesis via DAP pathway; DL-2,6-diaminopimelate from LL-2,6-diaminopimelate: step 1/1. Its function is as follows. Catalyzes the stereoinversion of LL-2,6-diaminopimelate (L,L-DAP) to meso-diaminopimelate (meso-DAP), a precursor of L-lysine and an essential component of the bacterial peptidoglycan. This Burkholderia vietnamiensis (strain G4 / LMG 22486) (Burkholderia cepacia (strain R1808)) protein is Diaminopimelate epimerase.